The chain runs to 132 residues: Interleukin-13 (132 aa).

The first 18 residues, 1–18 (MALLLTTVIALTCLGGFA), serve as a signal peptide directing secretion. Residues asparagine 38, asparagine 49, asparagine 57, and asparagine 72 are each glycosylated (N-linked (GlcNAc...) asparagine). Intrachain disulfides connect cysteine 48/cysteine 76 and cysteine 64/cysteine 90.

It belongs to the IL-4/IL-13 family. Interacts with IL13RA2.

The protein resides in the secreted. Cytokine that plays important roles in allergic inflammation and immune response to parasite infection. Synergizes with IL2 in regulating interferon-gamma synthesis. Stimulates B-cell proliferation, and activation of eosinophils, basophils, and mast cells. Plays an important role in controlling IL33 activity by modulating the production of transmembrane and soluble forms of interleukin-1 receptor-like 1/IL1RL1. Displays the capacity to antagonize Th1-driven proinflammatory immune response and downregulates synthesis of many proinflammatory cytokines including IL1, IL6, IL10, IL12 and TNF-alpha through a mechanism that partially involves suppression of NF-kappa-B. Also functions on nonhematopoietic cells, including endothelial cells where it induces vascular cell adhesion protein 1/VCAM1, which is important in the recruitment of eosinophils. Exerts its biological effects through its receptors which comprises the IL4R chain and the IL13RA1 chain, to activate JAK1 and TYK2, leading to the activation of STAT6. Aside from IL13RA1, another receptor IL13RA2 acts as a high affinity decoy for IL13 and mediates internalization and depletion of extracellular IL13. The chain is Interleukin-13 (IL13) from Macaca mulatta (Rhesus macaque).